The following is a 522-amino-acid chain: Amphoterin-induced protein 2 (522 aa).

A signal peptide spans 1-39; the sequence is MSLRVHTLPTLLGAVVRPGCRELLCLLMITVTVGPGASG. One can recognise an LRRNT domain in the interval 40–68; it reads VCPTACICATDIVSCTNKNLSKVPGNLFR. Over 40–398 the chain is Extracellular; it reads VCPTACICAT…RSHAHEAFNT (359 aa). Intrachain disulfides connect cysteine 41-cysteine 47 and cysteine 45-cysteine 54. Asparagine 58 carries an N-linked (GlcNAc...) asparagine glycan. 6 LRR repeats span residues 69–90, 94–115, 118–139, 142–163, 166–187, and 193–214; these read LIKR…WIPV, KLNT…SFST, NLKC…VFQE, VLEV…AFGG, QLQK…LYVG, and ELMF…HINL. Asparagine 104 carries N-linked (GlcNAc...) asparagine glycosylation. The 57-residue stretch at 228-284 folds into the LRRCT domain; that stretch reads NPFVCDCSLYSLLVFWYRRHFSSVMDFKNDYTCRLWSDSRHSRQVLLLQDSFMNCSD. Disulfide bonds link cysteine 232–cysteine 260 and cysteine 234–cysteine 282. Residues asparagine 281, asparagine 288, asparagine 345, asparagine 373, asparagine 381, and asparagine 384 are each glycosylated (N-linked (GlcNAc...) asparagine). An Ig-like C2-type domain is found at 289–379; sequence GSFRALGFIH…RLLNETVDVT (91 aa). An intrachain disulfide couples cysteine 310 to cysteine 363. A helical transmembrane segment spans residues 399–419; the sequence is AFTTLAACVASIVLVLLYLYL. The Cytoplasmic segment spans residues 420–522; sequence TPCPCKCKTK…FSDTPFVAST (103 aa). The tract at residues 501–522 is disordered; the sequence is RGKSDSDSVNSVFSDTPFVAST.

The protein belongs to the immunoglobulin superfamily. AMIGO family. As to quaternary structure, binds itself as well as AMIGO1 and AMIGO3. In terms of tissue distribution, highest levels in breast, ovary, cervix, and uterus. Lower levels in lung, colon, and rectum. Differentially expressed in 56% of thyroid, 57% of pancreatic and 45% of stomach cancers.

The protein resides in the cell membrane. It is found in the nucleus. Required for depolarization-dependent survival of cultured cerebellar granule neurons. May mediate homophilic as well as heterophilic cell-cell interaction with AMIGO1 or AMIGO3. May contribute to signal transduction through its intracellular domain. May be required for tumorigenesis of a subset of gastric adenocarcinomas. This Homo sapiens (Human) protein is Amphoterin-induced protein 2.